The sequence spans 273 residues: Glutamate 5-kinase (273 aa).

Lys-15 contacts ATP. Residues Ser-55, Asp-142, and Asn-158 each coordinate substrate. Residues 178–179 (SD) and 220–226 (TGGMLSK) contribute to the ATP site.

It belongs to the glutamate 5-kinase family.

It is found in the cytoplasm. It catalyses the reaction L-glutamate + ATP = L-glutamyl 5-phosphate + ADP. Its pathway is amino-acid biosynthesis; L-proline biosynthesis; L-glutamate 5-semialdehyde from L-glutamate: step 1/2. Its function is as follows. Catalyzes the transfer of a phosphate group to glutamate to form L-glutamate 5-phosphate. The protein is Glutamate 5-kinase of Streptococcus pyogenes serotype M49 (strain NZ131).